The sequence spans 66 residues: Large ribosomal subunit protein bL32 (66 aa).

The protein belongs to the bacterial ribosomal protein bL32 family.

The protein is Large ribosomal subunit protein bL32 of Rickettsia bellii (strain OSU 85-389).